The sequence spans 165 residues: Small ribosomal subunit protein eS10 (165 aa).

Tyrosine 12 bears the Phosphotyrosine mark. Residues 90–165 form a disordered region; that stretch reads VPATLRRSRP…FGRGRGQPPQ (76 aa). Residues 97 to 128 show a composition bias toward basic and acidic residues; it reads SRPETGRPRPKGPEGERPARFTRGEADRDTYR. Residues lysine 138 and lysine 139 each participate in a glycyl lysine isopeptide (Lys-Gly) (interchain with G-Cter in ubiquitin) cross-link. Serine 146 is modified (phosphoserine). Arginine 153 carries the omega-N-methylarginine modification. Residues 154–165 are compositionally biased toward gly residues; sequence GGFGRGRGQPPQ. A symmetric dimethylarginine mark is found at arginine 158 and arginine 160.

It belongs to the eukaryotic ribosomal protein eS10 family. Component of the small ribosomal subunit. The methylated form interacts with NPM1. Post-translationally, methylated by PRMT5. Methylation is necessary for its interaction with NPS1, its localization in the granular component (GC) region of the nucleolus, for the proper assembly of ribosomes, protein synthesis and optimal cell proliferation. Monoubiquitinated by ZNF598 when a ribosome has stalled during translation of poly(A) sequences, leading to preclude synthesis of a long poly-lysine tail and initiate the ribosome quality control (RQC) pathway to degrade the potentially detrimental aberrant nascent polypeptide. Deubiquitinated by OTUD3 and USP21, antagonizing ZNF598 activity. Deubiquitinated by OTUD1, antagonizing ZNF598 activity and stimulating formation of polysomes: deubiquitination by OTUD1 promotes stability and translation of a subset mRNAs with a high abundance of rare codons can limit the translation rate. Deubiquitinated by USP10.

Its subcellular location is the cytoplasm. The protein resides in the nucleus. It is found in the nucleolus. In terms of biological role, component of the 40S ribosomal subunit. The ribosome is a large ribonucleoprotein complex responsible for the synthesis of proteins in the cell. This Rattus norvegicus (Rat) protein is Small ribosomal subunit protein eS10 (Rps10).